A 267-amino-acid polypeptide reads, in one-letter code: Actin maturation protease (267 aa).

Positions 1 to 32 (MSNISSVAPPPPPPPMIVTPSTPATTKERPVG) are disordered. Over residues 8-17 (APPPPPPPMI) the composition is skewed to pro residues. The interval 74 to 188 (SIVQVGPTCG…WALIVGYLVD (115 aa)) is peptidase C39-like. Residue cysteine 82 is part of the active site.

The protein belongs to the ACTMAP family.

The catalysed reaction is N-terminal N(alpha)-acetyl-L-cysteinyl-L-aspartyl-[protein] + H2O = N-terminal L-aspartyl-[protein] + N-acetyl-L-cysteine. Functionally, actin maturation protease that specifically mediates the cleavage of immature acetylated N-terminal actin, thereby contributing to actin maturation. This Drosophila melanogaster (Fruit fly) protein is Actin maturation protease.